A 503-amino-acid polypeptide reads, in one-letter code: Aromatase (503 aa).

The next 2 membrane-spanning stretches (helical) occupy residues 19 to 39 (EVVP…LLVW) and 53 to 73 (FLGI…IGSA). D309 and M374 together coordinate substrate. A heme-binding site is contributed by C437.

This sequence belongs to the cytochrome P450 family. Requires heme as cofactor.

It is found in the endoplasmic reticulum membrane. The protein resides in the microsome membrane. It catalyses the reaction testosterone + 3 reduced [NADPH--hemoprotein reductase] + 3 O2 = 17beta-estradiol + formate + 3 oxidized [NADPH--hemoprotein reductase] + 4 H2O + 4 H(+). It carries out the reaction androst-4-ene-3,17-dione + 3 reduced [NADPH--hemoprotein reductase] + 3 O2 = estrone + formate + 3 oxidized [NADPH--hemoprotein reductase] + 4 H2O + 4 H(+). The catalysed reaction is androst-4-ene-3,17-dione + reduced [NADPH--hemoprotein reductase] + O2 = 19-hydroxyandrost-4-ene-3,17-dione + oxidized [NADPH--hemoprotein reductase] + H2O + H(+). The enzyme catalyses 19-hydroxyandrost-4-ene-3,17-dione + reduced [NADPH--hemoprotein reductase] + O2 = 19-oxo-androst-4-ene-3,17-dione + oxidized [NADPH--hemoprotein reductase] + 2 H2O + H(+). It catalyses the reaction 19-oxo-androst-4-ene-3,17-dione + reduced [NADPH--hemoprotein reductase] + O2 = estrone + formate + oxidized [NADPH--hemoprotein reductase] + H2O + 2 H(+). It carries out the reaction estrone + reduced [NADPH--hemoprotein reductase] + O2 = 2-hydroxyestrone + oxidized [NADPH--hemoprotein reductase] + H2O + H(+). The catalysed reaction is 17beta-hydroxy-5alpha-androstan-3-one + reduced [NADPH--hemoprotein reductase] + O2 = 17beta,19-dihydroxy-3-oxo-5alpha-androstanone + oxidized [NADPH--hemoprotein reductase] + H2O + H(+). The enzyme catalyses 17beta,19-dihydroxy-3-oxo-5alpha-androstanone + reduced [NADPH--hemoprotein reductase] + O2 = 17beta-hydroxy-3,19-dioxo-5alpha-androstanone + oxidized [NADPH--hemoprotein reductase] + 2 H2O + H(+). It catalyses the reaction 17beta-hydroxy-3,19-dioxo-5alpha-androstanone + reduced [NADPH--hemoprotein reductase] + O2 = 17beta-hydroxy-3-oxo-19-nor-5alpha-androst-1-ene + formate + oxidized [NADPH--hemoprotein reductase] + H2O + 2 H(+). It functions in the pathway steroid hormone biosynthesis. In terms of biological role, a cytochrome P450 monooxygenase that catalyzes the conversion of C19 androgens, androst-4-ene-3,17-dione (androstenedione) and testosterone to the C18 estrogens, estrone and estradiol, respectively. Catalyzes three successive oxidations of C19 androgens: two conventional oxidations at C19 yielding 19-hydroxy and 19-oxo/19-aldehyde derivatives, followed by a third oxidative aromatization step that involves C1-beta hydrogen abstraction combined with cleavage of the C10-C19 bond to yield a phenolic A ring and formic acid. Alternatively, the third oxidative reaction yields a 19-norsteroid and formic acid. Converts dihydrotestosterone to delta1,10-dehydro 19-nordihydrotestosterone and may play a role in homeostasis of this potent androgen. Also displays 2-hydroxylase activity toward estrone. Mechanistically, uses molecular oxygen inserting one oxygen atom into a substrate, and reducing the second into a water molecule, with two electrons provided by NADPH via cytochrome P450 reductase (CPR; NADPH-ferrihemoprotein reductase). This Bos taurus (Bovine) protein is Aromatase (CYP19A1).